A 624-amino-acid polypeptide reads, in one-letter code: (-)-beta-phellandrene synthase 2, chloroplastic (624 aa).

A chloroplast-targeting transit peptide spans 1–47 (MALVSVAPLVSMRRSLFSSPYELKSIDKTIPNLVMCRKRMLGRPSIR). Mg(2+)-binding residues include Asp375, Asp379, and Asp527. Residues 375–379 (DDIYD) carry the DDXXD motif motif.

The protein belongs to the terpene synthase family. Tpsd subfamily. It depends on Mg(2+) as a cofactor. Mn(2+) is required as a cofactor.

It localises to the plastid. The protein resides in the chloroplast. It catalyses the reaction (2E)-geranyl diphosphate = (-)-beta-phellandrene + diphosphate. It functions in the pathway terpene metabolism; oleoresin biosynthesis. Its pathway is secondary metabolite biosynthesis; terpenoid biosynthesis. Its function is as follows. Monoterpene synthase (TPS) involved in the biosynthesis of monoterpene natural products included in conifer oleoresin secretions and volatile emissions; these compounds contribute to biotic and abiotic stress defense against herbivores and pathogens. Catalyzes the conversion of (2E)-geranyl diphosphate (GPP) to (-)-beta-phellandrene. The chain is (-)-beta-phellandrene synthase 2, chloroplastic from Pinus contorta (Shore pine).